We begin with the raw amino-acid sequence, 105 residues long: Flagellar transcriptional regulator FlhD (105 aa).

Belongs to the FlhD family. In terms of assembly, homodimer; disulfide-linked. Forms a heterohexamer composed of two FlhC and four FlhD subunits. Each FlhC binds a FlhD dimer, forming a heterotrimer, and a hexamer assembles by dimerization of two heterotrimers.

It localises to the cytoplasm. Functionally, functions in complex with FlhC as a master transcriptional regulator that regulates transcription of several flagellar and non-flagellar operons by binding to their promoter region. Activates expression of class 2 flagellar genes, including fliA, which is a flagellum-specific sigma factor that turns on the class 3 genes. Also regulates genes whose products function in a variety of physiological pathways. In Ralstonia nicotianae (strain ATCC BAA-1114 / GMI1000) (Ralstonia solanacearum), this protein is Flagellar transcriptional regulator FlhD.